We begin with the raw amino-acid sequence, 389 residues long: Maintenance of mitochondrial morphology protein 1-1 (389 aa).

Residues 1–22 (MSQFVLPAVASEGIINWPFLTG) are Lumenal-facing. A helical transmembrane segment spans residues 23-43 (FMLGQFSVGLVLLIFVRFFIF). Residues 44 to 389 (SDQTEPDINT…YRSLQTSPRR (346 aa)) are Cytoplasmic-facing. Residues 83–278 (QPESLDWFSV…YPEYQQFELP (196 aa)) enclose the SMP-LTD domain. Disordered stretches follow at residues 283–345 (KTSA…PKFI) and 360–389 (FYEM…SPRR). Residues 330-341 (MSMSSQRPNINN) are compositionally biased toward polar residues.

The protein belongs to the MMM1 family. As to quaternary structure, homodimer. Component of the ER-mitochondria encounter structure (ERMES) or MDM complex, composed of MMM1, MDM10, MDM12 and MDM34. An MMM1 homodimer associates with one molecule of MDM12 on each side in a pairwise head-to-tail manner, and the SMP-LTD domains of MMM1 and MDM12 generate a continuous hydrophobic tunnel for phospholipid trafficking.

It is found in the endoplasmic reticulum membrane. In terms of biological role, component of the ERMES/MDM complex, which serves as a molecular tether to connect the endoplasmic reticulum (ER) and mitochondria. Components of this complex are involved in the control of mitochondrial shape and protein biogenesis, and function in nonvesicular lipid trafficking between the ER and mitochondria. The MDM12-MMM11 subcomplex functions in the major beta-barrel assembly pathway that is responsible for biogenesis of all outer membrane beta-barrel proteins, and acts in a late step after the SAM complex. The MDM10-MDM12-MMM1 subcomplex further acts in the TOM40-specific pathway after the action of the MDM12-MMM1 complex. Essential for establishing and maintaining the structure of mitochondria and maintenance of mtDNA nucleoids. This is Maintenance of mitochondrial morphology protein 1-1 from Yarrowia lipolytica (strain CLIB 122 / E 150) (Yeast).